A 353-amino-acid polypeptide reads, in one-letter code: Lipase ZK262.3 (353 aa).

The N-terminal stretch at 1 to 22 (MPKNLRFSVFLLFLLCINSVFG) is a signal peptide. Residues asparagine 32 and asparagine 64 are each glycosylated (N-linked (GlcNAc...) asparagine). Serine 163 functions as the Nucleophile in the catalytic mechanism. Aspartate 221 (charge relay system) is an active-site residue. An N-linked (GlcNAc...) asparagine glycan is attached at asparagine 267. Residues cysteine 277 and cysteine 288 are joined by a disulfide bond. Histidine 306 (charge relay system) is an active-site residue.

The protein belongs to the AB hydrolase superfamily. Lipase family.

The protein resides in the secreted. Its function is as follows. Probable lipase. This chain is Lipase ZK262.3, found in Caenorhabditis elegans.